A 215-amino-acid chain; its full sequence is Chaperone protein TorD (215 aa).

Belongs to the TorD/DmsD family. TorD subfamily.

It is found in the cytoplasm. In terms of biological role, involved in the biogenesis of TorA. Acts on TorA before the insertion of the molybdenum cofactor and, as a result, probably favors a conformation of the apoenzyme that is competent for acquiring the cofactor. The polypeptide is Chaperone protein TorD (Shewanella piezotolerans (strain WP3 / JCM 13877)).